The sequence spans 607 residues: Aspartate--tRNA(Asp/Asn) ligase (607 aa).

Glu-176 lines the L-aspartate pocket. The tract at residues 200–203 (QQFK) is aspartate. L-aspartate-binding residues include Arg-222 and His-456. 222 to 224 (RDE) provides a ligand contact to ATP. Position 496 (Glu-496) interacts with ATP. Residue Arg-503 coordinates L-aspartate. 548 to 551 (GIDR) contributes to the ATP binding site.

The protein belongs to the class-II aminoacyl-tRNA synthetase family. Type 1 subfamily. As to quaternary structure, homodimer.

The protein localises to the cytoplasm. It catalyses the reaction tRNA(Asx) + L-aspartate + ATP = L-aspartyl-tRNA(Asx) + AMP + diphosphate. Its function is as follows. Aspartyl-tRNA synthetase with relaxed tRNA specificity since it is able to aspartylate not only its cognate tRNA(Asp) but also tRNA(Asn). Reaction proceeds in two steps: L-aspartate is first activated by ATP to form Asp-AMP and then transferred to the acceptor end of tRNA(Asp/Asn). This Parvibaculum lavamentivorans (strain DS-1 / DSM 13023 / NCIMB 13966) protein is Aspartate--tRNA(Asp/Asn) ligase.